The following is a 174-amino-acid chain: Dual-action ribosomal maturation protein DarP (174 aa).

This sequence belongs to the DarP family.

Its subcellular location is the cytoplasm. In terms of biological role, member of a network of 50S ribosomal subunit biogenesis factors which assembles along the 30S-50S interface, preventing incorrect 23S rRNA structures from forming. Promotes peptidyl transferase center (PTC) maturation. This is Dual-action ribosomal maturation protein DarP from Vibrio atlanticus (strain LGP32) (Vibrio splendidus (strain Mel32)).